The sequence spans 357 residues: Serpentine receptor class epsilon-30 (357 aa).

A run of 7 helical transmembrane segments spans residues Ile-31 to Met-51, Leu-61 to Ile-81, Leu-121 to Leu-141, Ile-165 to Ile-185, Phe-192 to Ile-212, Leu-253 to Phe-273, and Leu-283 to Ile-303.

It belongs to the nematode receptor-like protein sre family.

The protein localises to the membrane. The polypeptide is Serpentine receptor class epsilon-30 (sre-30) (Caenorhabditis elegans).